The primary structure comprises 1111 residues: Cellulose synthase-like protein D4 (1111 aa).

2 disordered regions span residues 1 to 26 (MASTPPQTSKKVRNNSGSGQTVKFAR) and 175 to 202 (DYSSGALPLPAPGKDQRGNNNNMSMMKR). The span at 192 to 202 (GNNNNMSMMKR) shows a compositional bias: polar residues. Transmembrane regions (helical) follow at residues 266-286 (AIISPYRLLIVIRFVVLCFFL) and 297-317 (AIWLWLMSIICELWFGFSWIL). Residues Asp397 and Asp809 contribute to the active site. The next 6 helical transmembrane spans lie at 891–911 (LFLILYCFLPAFSLFSGQFIV), 914–934 (LSISFLVYLLMITICLIGLAV), 963–983 (LYAVVQGVLKVIAGIEISFTL), 1007–1027 (LMIPPIVIAMVNIIAIVVAFI), 1040–1060 (LIGGAFFSFWVLAHLYPFAKG), and 1070–1090 (TIVFVWAGLIAITISLLWTAI).

Belongs to the glycosyltransferase 2 family. Plant cellulose synthase-like D subfamily.

The protein resides in the golgi apparatus membrane. Thought to be a Golgi-localized beta-glycan synthase that polymerize the backbones of noncellulosic polysaccharides (hemicelluloses) of plant cell wall. The sequence is that of Cellulose synthase-like protein D4 (CSLD4) from Arabidopsis thaliana (Mouse-ear cress).